Here is a 1595-residue protein sequence, read N- to C-terminus: Pentafunctional AROM polypeptide (1595 aa).

Residues 1 to 384 (MGVPTKISIL…HEPRASTVSN (384 aa)) form a 3-dehydroquinate synthase region. NAD(+) contacts are provided by residues 44–46 (DTN), 81–84 (ESSK), 114–116 (GGV), and D119. Position 130 (R130) interacts with 7-phospho-2-dehydro-3-deoxy-D-arabino-heptonate. Position 139 to 140 (139 to 140 (TT)) interacts with NAD(+). 7-phospho-2-dehydro-3-deoxy-D-arabino-heptonate contacts are provided by D146 and K152. K161 provides a ligand contact to NAD(+). N162 is a binding site for 7-phospho-2-dehydro-3-deoxy-D-arabino-heptonate. Residues 179 to 182 (FLNT) and N190 each bind NAD(+). E194 is a Zn(2+) binding site. Residues 194–197 (EVIK) and K250 contribute to the 7-phospho-2-dehydro-3-deoxy-D-arabino-heptonate site. E260 functions as the Proton acceptor; for 3-dehydroquinate synthase activity in the catalytic mechanism. 7-phospho-2-dehydro-3-deoxy-D-arabino-heptonate-binding positions include 264 to 268 (RNLLN) and H271. Zn(2+) is bound at residue H271. H275 acts as the Proton acceptor; for 3-dehydroquinate synthase activity in catalysis. 7-phospho-2-dehydro-3-deoxy-D-arabino-heptonate contacts are provided by H287 and K356. H287 contacts Zn(2+). Residues 397–842 (VSPGVPKGLD…WDSLAQTFKV (446 aa)) are EPSP synthase. C824 serves as the catalytic For EPSP synthase activity. A shikimate kinase region spans residues 866–1057 (ASIFIIGMRG…RRKENTFFVS (192 aa)). Position 872-879 (872-879 (GMRGAGKT)) interacts with ATP. Positions 1058–1278 (LTLPDLSLAA…AAPGQLSARE (221 aa)) are 3-dehydroquinase. The active-site Proton acceptor; for 3-dehydroquinate dehydratase activity is the H1181. K1209 acts as the Schiff-base intermediate with substrate; for 3-dehydroquinate dehydratase activity in catalysis. Residues 1291–1595 (AKKFAVIGNP…MGVSPSEDIL (305 aa)) are shikimate dehydrogenase.

In the N-terminal section; belongs to the sugar phosphate cyclases superfamily. Dehydroquinate synthase family. This sequence in the 2nd section; belongs to the EPSP synthase family. It in the 3rd section; belongs to the shikimate kinase family. The protein in the 4th section; belongs to the type-I 3-dehydroquinase family. In the C-terminal section; belongs to the shikimate dehydrogenase family. Homodimer. Zn(2+) is required as a cofactor.

It is found in the cytoplasm. It catalyses the reaction 7-phospho-2-dehydro-3-deoxy-D-arabino-heptonate = 3-dehydroquinate + phosphate. It carries out the reaction 3-dehydroquinate = 3-dehydroshikimate + H2O. The enzyme catalyses shikimate + NADP(+) = 3-dehydroshikimate + NADPH + H(+). The catalysed reaction is shikimate + ATP = 3-phosphoshikimate + ADP + H(+). It catalyses the reaction 3-phosphoshikimate + phosphoenolpyruvate = 5-O-(1-carboxyvinyl)-3-phosphoshikimate + phosphate. The protein operates within metabolic intermediate biosynthesis; chorismate biosynthesis; chorismate from D-erythrose 4-phosphate and phosphoenolpyruvate: step 2/7. It participates in metabolic intermediate biosynthesis; chorismate biosynthesis; chorismate from D-erythrose 4-phosphate and phosphoenolpyruvate: step 3/7. Its pathway is metabolic intermediate biosynthesis; chorismate biosynthesis; chorismate from D-erythrose 4-phosphate and phosphoenolpyruvate: step 4/7. It functions in the pathway metabolic intermediate biosynthesis; chorismate biosynthesis; chorismate from D-erythrose 4-phosphate and phosphoenolpyruvate: step 5/7. The protein operates within metabolic intermediate biosynthesis; chorismate biosynthesis; chorismate from D-erythrose 4-phosphate and phosphoenolpyruvate: step 6/7. Its function is as follows. The AROM polypeptide catalyzes 5 consecutive enzymatic reactions in prechorismate polyaromatic amino acid biosynthesis. This Ajellomyces capsulatus (strain G186AR / H82 / ATCC MYA-2454 / RMSCC 2432) (Darling's disease fungus) protein is Pentafunctional AROM polypeptide.